The sequence spans 500 residues: Pyridine nucleotide-disulfide oxidoreductase domain-containing protein 1 (500 aa).

Met-1 carries the post-translational modification N-acetylmethionine. Positions 211–235 are disordered; that stretch reads TRYTTEGRKKEARSKSKADNVGSAL. A compositionally biased stretch (basic and acidic residues) spans 213–228; sequence YTTEGRKKEARSKSKA.

The protein belongs to the class-I pyridine nucleotide-disulfide oxidoreductase family. PYROXD1 subfamily. FAD serves as cofactor.

The protein localises to the nucleus. It is found in the cytoplasm. Its subcellular location is the myofibril. The protein resides in the sarcomere. Functionally, probable FAD-dependent oxidoreductase; involved in the cellular oxidative stress response. Required for normal sarcomere structure and muscle fiber integrity. The sequence is that of Pyridine nucleotide-disulfide oxidoreductase domain-containing protein 1 (PYROXD1) from Homo sapiens (Human).